The chain runs to 100 residues: Urease subunit gamma (100 aa).

The protein belongs to the urease gamma subunit family. As to quaternary structure, heterotrimer of UreA (gamma), UreB (beta) and UreC (alpha) subunits. Three heterotrimers associate to form the active enzyme.

The protein resides in the cytoplasm. It carries out the reaction urea + 2 H2O + H(+) = hydrogencarbonate + 2 NH4(+). Its pathway is nitrogen metabolism; urea degradation; CO(2) and NH(3) from urea (urease route): step 1/1. The protein is Urease subunit gamma of Magnetococcus marinus (strain ATCC BAA-1437 / JCM 17883 / MC-1).